Reading from the N-terminus, the 660-residue chain is Baseplate wedge protein gp6 (660 aa).

It belongs to the T4likevirus baseplate wedge protein gp6 family. In terms of assembly, homodimer; each gp6 molecule in the ring interacts with its two neighbors, forming an N-terminal dimer with one and a C-terminal dimer with the other. Heterotrimer with gp7; gp6 is part of a (gp6)2-gp7 heterotrimeric molecule. The (gp6)2-gp7 heterotrimeric molecule further interacts with gp25 and gp53; the gp25-(gp6)2-gp7 module is involved in sheath contraction. Part of the baseplate macromolecular complex which consists of gp5, gp5.4, gp27 (central spike complex); gp6, gp25, gp53 (inner baseplate); gp7, gp8 (intermediate baseplate); gp9, gp10, gp11, gp12 (peripheral); gp48 and gp54 (proximal region of the tail tube).

The protein localises to the virion. Baseplate protein that is located next to the tail tube (inner baseplate). Involved in the tail assembly. The gp25-(gp6)2-gp7 module is involved in sheath contraction. This is Baseplate wedge protein gp6 (6) from Escherichia coli (Bacteriophage T4).